Here is a 99-residue protein sequence, read N- to C-terminus: UPF0386 protein mll0189 (99 aa).

Belongs to the UPF0386 family.

In Mesorhizobium japonicum (strain LMG 29417 / CECT 9101 / MAFF 303099) (Mesorhizobium loti (strain MAFF 303099)), this protein is UPF0386 protein mll0189.